A 511-amino-acid polypeptide reads, in one-letter code: UDP-N-acetylmuramoyl-L-alanyl-D-glutamate--2,6-diaminopimelate ligase (511 aa).

Serine 33 contributes to the UDP-N-acetyl-alpha-D-muramoyl-L-alanyl-D-glutamate binding site. 118-124 (GTNGKTT) is a binding site for ATP. UDP-N-acetyl-alpha-D-muramoyl-L-alanyl-D-glutamate contacts are provided by residues 160-161 (TT), serine 187, glutamine 193, and arginine 195. An N6-carboxylysine modification is found at lysine 227. Residues arginine 403, 427–430 (DNPR), glycine 478, and glutamate 482 contribute to the meso-2,6-diaminopimelate site. Residues 427-430 (DNPR) carry the Meso-diaminopimelate recognition motif motif.

The protein belongs to the MurCDEF family. MurE subfamily. Requires Mg(2+) as cofactor. Carboxylation is probably crucial for Mg(2+) binding and, consequently, for the gamma-phosphate positioning of ATP.

It is found in the cytoplasm. The catalysed reaction is UDP-N-acetyl-alpha-D-muramoyl-L-alanyl-D-glutamate + meso-2,6-diaminopimelate + ATP = UDP-N-acetyl-alpha-D-muramoyl-L-alanyl-gamma-D-glutamyl-meso-2,6-diaminopimelate + ADP + phosphate + H(+). It functions in the pathway cell wall biogenesis; peptidoglycan biosynthesis. Catalyzes the addition of meso-diaminopimelic acid to the nucleotide precursor UDP-N-acetylmuramoyl-L-alanyl-D-glutamate (UMAG) in the biosynthesis of bacterial cell-wall peptidoglycan. The polypeptide is UDP-N-acetylmuramoyl-L-alanyl-D-glutamate--2,6-diaminopimelate ligase (Prochlorococcus marinus subsp. pastoris (strain CCMP1986 / NIES-2087 / MED4)).